The chain runs to 424 residues: Gamma-glutamyl phosphate reductase (424 aa).

This sequence belongs to the gamma-glutamyl phosphate reductase family.

The protein resides in the cytoplasm. It carries out the reaction L-glutamate 5-semialdehyde + phosphate + NADP(+) = L-glutamyl 5-phosphate + NADPH + H(+). It participates in amino-acid biosynthesis; L-proline biosynthesis; L-glutamate 5-semialdehyde from L-glutamate: step 2/2. In terms of biological role, catalyzes the NADPH-dependent reduction of L-glutamate 5-phosphate into L-glutamate 5-semialdehyde and phosphate. The product spontaneously undergoes cyclization to form 1-pyrroline-5-carboxylate. This chain is Gamma-glutamyl phosphate reductase, found in Halorhodospira halophila (strain DSM 244 / SL1) (Ectothiorhodospira halophila (strain DSM 244 / SL1)).